The sequence spans 321 residues: Methenyltetrahydromethanopterin cyclohydrolase (321 aa).

It belongs to the MCH family.

The protein localises to the cytoplasm. It catalyses the reaction 5,10-methenyl-5,6,7,8-tetrahydromethanopterin + H2O = N(5)-formyl-5,6,7,8-tetrahydromethanopterin + H(+). The protein operates within one-carbon metabolism; methanogenesis from CO(2); 5,10-methenyl-5,6,7,8-tetrahydromethanopterin from CO(2): step 3/3. Its function is as follows. Catalyzes the reversible interconversion of 5-formyl-H(4)MPT to methenyl-H(4)MPT(+). The protein is Methenyltetrahydromethanopterin cyclohydrolase of Methanosarcina mazei (strain ATCC BAA-159 / DSM 3647 / Goe1 / Go1 / JCM 11833 / OCM 88) (Methanosarcina frisia).